The sequence spans 59 residues: Single-pass membrane and coiled-coil domain-containing protein 4 (59 aa).

Positions Met-1–Arg-27 are disordered. The span at Lys-9 to Arg-27 shows a compositional bias: basic and acidic residues. Residues Lys-9–Thr-31 adopt a coiled-coil conformation. A helical membrane pass occupies residues Thr-32–Ala-52.

Belongs to the SMCO4 family.

It localises to the membrane. The sequence is that of Single-pass membrane and coiled-coil domain-containing protein 4 (SMCO4) from Bos taurus (Bovine).